Reading from the N-terminus, the 258-residue chain is Thiamine thiazole synthase (258 aa).

NAD(+)-binding positions include S36, 55–56 (ER), G63, V127, and 153–155 (HVD). 2 residues coordinate Fe cation: D155 and H170. M224 contacts NAD(+). R234 contributes to the glycine binding site.

Belongs to the THI4 family. In terms of assembly, homooctamer; tetramer of dimers. Fe(2+) serves as cofactor.

It catalyses the reaction hydrogen sulfide + glycine + NAD(+) = ADP-5-ethyl-4-methylthiazole-2-carboxylate + nicotinamide + 3 H2O + H(+). Its pathway is cofactor biosynthesis; thiamine diphosphate biosynthesis. Its function is as follows. Involved in the biosynthesis of the thiazole moiety of thiamine. Catalyzes the conversion of NAD and glycine to adenosine diphosphate 5-(2-hydroxyethyl)-4-methylthiazole-2-carboxylate (ADT), an adenylated thiazole intermediate, using free sulfide as a source of sulfur. The polypeptide is Thiamine thiazole synthase (Desulfosudis oleivorans (strain DSM 6200 / JCM 39069 / Hxd3) (Desulfococcus oleovorans)).